The chain runs to 232 residues: Large ribosomal subunit protein uL1 (232 aa).

Belongs to the universal ribosomal protein uL1 family. In terms of assembly, part of the 50S ribosomal subunit.

In terms of biological role, binds directly to 23S rRNA. The L1 stalk is quite mobile in the ribosome, and is involved in E site tRNA release. Functionally, protein L1 is also a translational repressor protein, it controls the translation of the L11 operon by binding to its mRNA. The sequence is that of Large ribosomal subunit protein uL1 from Burkholderia cenocepacia (strain ATCC BAA-245 / DSM 16553 / LMG 16656 / NCTC 13227 / J2315 / CF5610) (Burkholderia cepacia (strain J2315)).